The chain runs to 346 residues: Leucine zipper protein 2 (346 aa).

An N-terminal signal peptide occupies residues 1–17 (MKFIGAVYLLFLLPALS). 2 N-linked (GlcNAc...) asparagine glycosylation sites follow: Asn19 and Asn131. Residues 41 to 209 (RHLSKTSKEL…QLKALKDTVH (169 aa)) are a coiled coil. The leucine-zipper stretch occupies residues 162 to 190 (LRYGKKDLIFKGQQLMDLENKLKVAKDEL). Residues Asn241 and Asn296 are each glycosylated (N-linked (GlcNAc...) asparagine). A disordered region spans residues 271–346 (SAVMRRESTG…LKKTQSDKHN (76 aa)). Residues 293–324 (CSHNQTESSSVMKKTFGHSQSKTPEQNGQGQA) show a composition bias toward polar residues. Positions 326 to 346 (TAEESVKTDGELKKTQSDKHN) are enriched in basic and acidic residues.

It localises to the secreted. In Danio rerio (Zebrafish), this protein is Leucine zipper protein 2 (luzp2).